A 201-amino-acid chain; its full sequence is Superoxide dismutase [Mn] (201 aa).

Mn(2+)-binding residues include His27, His81, Asp163, and His167.

Belongs to the iron/manganese superoxide dismutase family. In terms of assembly, homodimer. Requires Mn(2+) as cofactor.

It localises to the secreted. It carries out the reaction 2 superoxide + 2 H(+) = H2O2 + O2. Functionally, destroys superoxide anion radicals which are normally produced within the cells and which are toxic to biological systems. The protein is Superoxide dismutase [Mn] (sodA) of Streptococcus pyogenes serotype M6 (strain ATCC BAA-946 / MGAS10394).